A 349-amino-acid chain; its full sequence is ATP phosphoribosyltransferase regulatory subunit (349 aa).

A disordered region spans residues 325–349 (ANGRGRGVRPRRASARGGRAGTRPR). The span at 339-349 (ARGGRAGTRPR) shows a compositional bias: low complexity.

The protein belongs to the class-II aminoacyl-tRNA synthetase family. HisZ subfamily. Heteromultimer composed of HisG and HisZ subunits.

The protein localises to the cytoplasm. It participates in amino-acid biosynthesis; L-histidine biosynthesis; L-histidine from 5-phospho-alpha-D-ribose 1-diphosphate: step 1/9. Required for the first step of histidine biosynthesis. May allow the feedback regulation of ATP phosphoribosyltransferase activity by histidine. In Anaeromyxobacter dehalogenans (strain 2CP-C), this protein is ATP phosphoribosyltransferase regulatory subunit.